Consider the following 300-residue polypeptide: 4-hydroxy-tetrahydrodipicolinate synthase (300 aa).

Pyruvate is bound at residue threonine 54. Catalysis depends on tyrosine 142, which acts as the Proton donor/acceptor. The Schiff-base intermediate with substrate role is filled by lysine 170. Isoleucine 212 contributes to the pyruvate binding site.

It belongs to the DapA family. Homotetramer; dimer of dimers.

It is found in the cytoplasm. The catalysed reaction is L-aspartate 4-semialdehyde + pyruvate = (2S,4S)-4-hydroxy-2,3,4,5-tetrahydrodipicolinate + H2O + H(+). It participates in amino-acid biosynthesis; L-lysine biosynthesis via DAP pathway; (S)-tetrahydrodipicolinate from L-aspartate: step 3/4. Its function is as follows. Catalyzes the condensation of (S)-aspartate-beta-semialdehyde [(S)-ASA] and pyruvate to 4-hydroxy-tetrahydrodipicolinate (HTPA). This chain is 4-hydroxy-tetrahydrodipicolinate synthase, found in Halorhodospira halophila (strain DSM 244 / SL1) (Ectothiorhodospira halophila (strain DSM 244 / SL1)).